The primary structure comprises 353 residues: Photosystem II D2 protein (353 aa).

Position 2 is an N-acetylthreonine (Thr-2). Thr-2 is modified (phosphothreonine). A helical membrane pass occupies residues 41–61 (CAYFALGGWFTGTTFVTSWYT). His-118 is a chlorophyll a binding site. Residues 125–141 (GFMLRQFELARSVQLRP) traverse the membrane as a helical segment. Pheophytin a is bound by residues Gln-130 and Asn-143. The chain crosses the membrane as a helical span at residues 153–166 (VFVSVFLIYPLGQS). His-198 is a binding site for chlorophyll a. A helical transmembrane segment spans residues 208-228 (AALLCAIHGATVENTLFEDGD). 2 residues coordinate a plastoquinone: His-215 and Phe-262. His-215 is a binding site for Fe cation. His-269 contributes to the Fe cation binding site. The chain crosses the membrane as a helical span at residues 279 to 295 (GLWMSALGVVGLALNLR).

This sequence belongs to the reaction center PufL/M/PsbA/D family. As to quaternary structure, PSII is composed of 1 copy each of membrane proteins PsbA, PsbB, PsbC, PsbD, PsbE, PsbF, PsbH, PsbI, PsbJ, PsbK, PsbL, PsbM, PsbT, PsbX, PsbY, PsbZ, Psb30/Ycf12, at least 3 peripheral proteins of the oxygen-evolving complex and a large number of cofactors. It forms dimeric complexes. The cofactor is The D1/D2 heterodimer binds P680, chlorophylls that are the primary electron donor of PSII, and subsequent electron acceptors. It shares a non-heme iron and each subunit binds pheophytin, quinone, additional chlorophylls, carotenoids and lipids. There is also a Cl(-1) ion associated with D1 and D2, which is required for oxygen evolution. The PSII complex binds additional chlorophylls, carotenoids and specific lipids..

The protein localises to the plastid. It localises to the chloroplast thylakoid membrane. The catalysed reaction is 2 a plastoquinone + 4 hnu + 2 H2O = 2 a plastoquinol + O2. In terms of biological role, photosystem II (PSII) is a light-driven water:plastoquinone oxidoreductase that uses light energy to abstract electrons from H(2)O, generating O(2) and a proton gradient subsequently used for ATP formation. It consists of a core antenna complex that captures photons, and an electron transfer chain that converts photonic excitation into a charge separation. The D1/D2 (PsbA/PsbD) reaction center heterodimer binds P680, the primary electron donor of PSII as well as several subsequent electron acceptors. D2 is needed for assembly of a stable PSII complex. The sequence is that of Photosystem II D2 protein from Lemna minor (Common duckweed).